The chain runs to 817 residues: Cargo-transport protein YPP1 (817 aa).

This sequence belongs to the YPP1 family. Interacts with STT4 and ribosomes.

The protein resides in the cytoplasmic granule. It localises to the cell membrane. Functionally, involved in endocytosis. The sequence is that of Cargo-transport protein YPP1 (YPP1) from Saccharomyces cerevisiae (strain YJM789) (Baker's yeast).